The primary structure comprises 205 residues: Protein Nef (205 aa).

Glycine 2 carries N-myristoyl glycine; by host lipidation. Serine 6 carries the phosphoserine; by host modification. The interval 62-65 (EEGD) is acidic; interacts with host PACS1 and PACS2; stabilizes the interaction of NEF/MHC-I with host AP1M1; necessary for MHC-I internalization. The SH3-binding; interaction with Src family tyrosine kinases stretch occupies residues 69 to 78 (PVRPQVPLRP). The short motif at 72 to 75 (PQVP) is the PxxP; stabilizes the interaction of NEF/MHC-I with host AP1M1; necessary for MHC-I internalization element. The interval 108 to 124 (EILDLWVYHTQGFFPDW) is mediates dimerization, Nef-PTE1 interaction. The interval 148–180 (VDPAEVEEATGGENNSLLHPICQHGVDDEEKEV) is binding to ATP6V1H. Positions 164 to 165 (LL) match the Dileucine internalization motif; necessary for CD4 internalization motif. The Diacidic; necessary for CD4 internalization motif lies at 174 to 175 (DD).

Belongs to the lentivirus primate group Nef protein family. Monomer; cytosolic form. Homodimer; membrane bound form. Interacts with Nef associated p21-activated kinase (PAK2); this interaction activates PAK2. Associates with the Nef-MHC-I-AP1 complex; this complex is required for MHC-I internalization. Interacts (via C-terminus) with host PI3-kinase. Interacts with host PACS1; this interaction seems to be weak. Interacts with host PACS2. Interacts with host LCK and MAPK3; these interactions inhibit the kinase activity of the latter. Interacts with host ATP6V1H; this interaction may play a role in CD4 endocytosis. Associates with the CD4-Nef-AP2 complex; this complex is required for CD4 internalization. Interacts with host AP2 subunit alpha and AP2 subunit sigma2. Interacts with TCR-zeta chain; this interaction up-regulates the Fas ligand (FasL) surface expression. Interacts with host HCK, LYN, and SRC; these interactions activate the Src family kinases. Interacts with MAP3K5; this interaction inhibits the Fas and TNFR-mediated death signals. Interacts with beta-COP and PTE1. Interacts with human RACK1; this increases Nef phosphorylation by PKC. Interacts with TP53; this interaction decreases the half-life of TP53, protecting the infected cell against p53-mediated apoptosis. The virion-associated Nef proteins are cleaved by the viral protease to release the soluble C-terminal core protein. Nef is probably cleaved concomitantly with viral structural proteins on maturation of virus particles. Post-translationally, myristoylated. In terms of processing, phosphorylated on serine residues, probably by host PKCdelta and theta.

Its subcellular location is the host cell membrane. The protein localises to the virion. The protein resides in the secreted. It is found in the host Golgi apparatus membrane. In terms of biological role, factor of infectivity and pathogenicity, required for optimal virus replication. Alters numerous pathways of T-lymphocyte function and down-regulates immunity surface molecules in order to evade host defense and increase viral infectivity. Alters the functionality of other immunity cells, like dendritic cells, monocytes/macrophages and NK cells. In infected CD4(+) T-lymphocytes, down-regulates the surface MHC-I, mature MHC-II, CD4, CD28, CCR5 and CXCR4 molecules. Mediates internalization and degradation of host CD4 through the interaction of with the cytoplasmic tail of CD4, the recruitment of AP-2 (clathrin adapter protein complex 2), internalization through clathrin coated pits, and subsequent transport to endosomes and lysosomes for degradation. Diverts host MHC-I molecules to the trans-Golgi network-associated endosomal compartments by an endocytic pathway to finally target them for degradation. MHC-I down-regulation may involve AP-1 (clathrin adapter protein complex 1) or possibly Src family kinase-ZAP70/Syk-PI3K cascade recruited by PACS2. In consequence infected cells are masked for immune recognition by cytotoxic T-lymphocytes. Decreasing the number of immune receptors also prevents reinfection by more HIV particles (superinfection). Down-regulates host SERINC3 and SERINC5 thereby excluding these proteins from the viral particles. Virion infectivity is drastically higher when SERINC3 or SERINC5 are excluded from the viral envelope, because these host antiviral proteins impair the membrane fusion event necessary for subsequent virion penetration. Functionally, bypasses host T-cell signaling by inducing a transcriptional program nearly identical to that of anti-CD3 cell activation. Interaction with TCR-zeta chain up-regulates the Fas ligand (FasL). Increasing surface FasL molecules and decreasing surface MHC-I molecules on infected CD4(+) cells send attacking cytotoxic CD8+ T-lymphocytes into apoptosis. Its function is as follows. Plays a role in optimizing the host cell environment for viral replication without causing cell death by apoptosis. Protects the infected cells from apoptosis in order to keep them alive until the next virus generation is ready to strike. Inhibits the Fas and TNFR-mediated death signals by blocking MAP3K5/ASK1. Decreases the half-life of TP53, protecting the infected cell against p53-mediated apoptosis. Inhibits the apoptotic signals regulated by the Bcl-2 family proteins through the formation of a Nef/PI3-kinase/PAK2 complex that leads to activation of PAK2 and induces phosphorylation of host BAD. In terms of biological role, extracellular Nef protein targets CD4(+) T-lymphocytes for apoptosis by interacting with CXCR4 surface receptors. The sequence is that of Protein Nef from Human immunodeficiency virus type 1 group M subtype A (isolate U455) (HIV-1).